The sequence spans 615 residues: Chaperone protein DnaK (615 aa).

Threonine 174 bears the Phosphothreonine; by autocatalysis mark. Positions 581–615 (QAAPKDGAEGDAKSADDNTVDGDFEEVDPNKDDKK) are disordered. The span at 586–596 (DGAEGDAKSAD) shows a compositional bias: basic and acidic residues. Positions 598-607 (NTVDGDFEEV) are enriched in acidic residues.

Belongs to the heat shock protein 70 family.

In terms of biological role, acts as a chaperone. This is Chaperone protein DnaK from Leuconostoc mesenteroides subsp. mesenteroides (strain ATCC 8293 / DSM 20343 / BCRC 11652 / CCM 1803 / JCM 6124 / NCDO 523 / NBRC 100496 / NCIMB 8023 / NCTC 12954 / NRRL B-1118 / 37Y).